The sequence spans 340 residues: Ferrochelatase (340 aa).

2 residues coordinate Fe cation: histidine 189 and glutamate 292.

This sequence belongs to the ferrochelatase family.

The protein localises to the cytoplasm. It carries out the reaction heme b + 2 H(+) = protoporphyrin IX + Fe(2+). It functions in the pathway porphyrin-containing compound metabolism; protoheme biosynthesis; protoheme from protoporphyrin-IX: step 1/1. In terms of biological role, catalyzes the ferrous insertion into protoporphyrin IX. In Pseudomonas fluorescens (strain ATCC BAA-477 / NRRL B-23932 / Pf-5), this protein is Ferrochelatase.